Consider the following 1045-residue polypeptide: MGEIEQRPTPGSRLGAPENSGISTLERGQKPPPTPSGKLVSIKIQMLDDTQEAFEVPQRAPGKVLLDAVCNHLNLVEGDYFGLEFPDHKKITVWLDLLKPIVKQIRRPKHVVVKFVVKFFPPDHTQLQEELTRYLFALQVKQDLAQGRLTCNDTSAALLISHIVQSEIGDFDEALDREHLAKNKYIPQQDALEDKIVEFHHNHIGQTPAESDFQLLEIARRLEMYGIRLHPAKDREGTKINLAVANTGILVFQGFTKINAFNWAKVRKLSFKRKRFLIKLRPDANSAYQDTLEFLMASRDFCKSFWKICVEHHAFFRLFEEPKPKPKPVLFSRGSSFRFSGRTQKQVLDYVKEGGHKKVQFERKHSKIHSIRSLASQPTELNSEVLEQSQQSTSLTFGEGAESPGGQSCRRGKEPKVSAGEPGSHPSPAPRRSPAGNKQADGAASAPTEEEEEVVKDRTQQSKPQPPQPSTGSLTGSPHLSELSVNSQGGVAPANVTLSPNLSPDTKQASPLISPLLNDQACPRTDDEDEGRRKRFPTDKAYFIAKEVSTTERTYLKDLEVITSWFQSTVSKEDAMPEALKSLIFPNFEPLHKFHTNFLKEIEQRLALWEGRSNAQIRDYQRIGDVMLKNIQGMKHLAAHLWKHSEALEALENGIKSSRRLENFCRDFELQKVCYLPLNTFLLRPLHRLMHYKQVLERLCKHHPPSHADFRDCRAALAEITEMVAQLHGTMIKMENFQKLHELKKDLIGIDNLVVPGREFIRLGSLSKLSGKGLQQRMFFLFNDVLLYTSRGLTASNQFKVHGQLPLYGMTIEESEDEWGVPHCLTLRGQRQSIIVAASSRSEMEKWVEDIQMAIDLAEKSSSPAPEFLASSPPDNKSPDEATAADQESEDDLSASRTSLERQAPHRGNTMVHVCWHRNTSVSMVDFSIAVENQLSGNLLRKFKNSNGWQKLWVVFTNFCLFFYKSHQDNHPLASLPLLGYSLTIPSESENIQKDYVFKLHFKSHVYYFRAESEYTFERWMEVIRSATSSASRPHVLSHKESLVY.

The interval 1–37 is disordered; sequence MGEIEQRPTPGSRLGAPENSGISTLERGQKPPPTPSG. Phosphoserine is present on residues Ser20 and Ser23. Thr24 is modified (phosphothreonine). The 281-residue stretch at 40–320 folds into the FERM domain; it reads VSIKIQMLDD…EHHAFFRLFE (281 aa). A phosphoserine mark is found at Ser340, Ser373, Ser389, Ser403, Ser418, Ser427, and Ser433. The interval 361 to 534 is disordered; sequence FERKHSKIHS…TDDEDEGRRK (174 aa). A compositionally biased stretch (polar residues) spans 373–396; it reads SLASQPTELNSEVLEQSQQSTSLT. Polar residues-rich tracts occupy residues 471–489 and 496–511; these read TGSL…NSQG and VTLS…QASP. Phosphoserine occurs at positions 510 and 514. Positions 540-730 constitute a DH domain; sequence KAYFIAKEVS…TEMVAQLHGT (191 aa). The region spanning 759-856 is the PH 1 domain; it reads EFIRLGSLSK…WVEDIQMAID (98 aa). Phosphoserine is present on residues Ser833, Ser872, and Ser878. The segment at 864 to 903 is disordered; that stretch reads PAPEFLASSPPDNKSPDEATAADQESEDDLSASRTSLERQ. Thr883 is modified (phosphothreonine). Phosphoserine is present on residues Ser889, Ser896, and Ser899. The PH 2 domain maps to 932–1029; it reads ENQLSGNLLR…WMEVIRSATS (98 aa).

Interacts with CADM1. Interacts with RAC1. In terms of tissue distribution, detected in cAMP-treated chondrocytes, but not in untreated chondrocytes. Detected in fetal brain, heart and spleen, and in adult testis, kidney and lung.

Its subcellular location is the cell membrane. It localises to the synapse. The protein localises to the synaptosome. It is found in the cytoplasm. The protein resides in the cytosol. Its subcellular location is the cell projection. It localises to the filopodium. The protein localises to the dendrite. It is found in the dendritic spine. Functions as a guanine nucleotide exchange factor for RAC1. May play a role in semaphorin signaling. Plays a role in the assembly and disassembly of dendritic filopodia, the formation of dendritic spines, regulation of dendrite length and ultimately the formation of synapses. This Homo sapiens (Human) protein is FERM, ARHGEF and pleckstrin domain-containing protein 1 (FARP1).